A 256-amino-acid chain; its full sequence is Na(+)-translocating NADH-quinone reductase subunit E (256 aa).

6 helical membrane-spanning segments follow: residues 1 to 21 (MWLGAYTWLNVFGILLQAAFI), 50 to 70 (MSVALVLTVTGSINWFVHAFI), 83 to 103 (LASVNLGFLELIIFIVVIAAF), 123 to 143 (GIFLPLIAVNCAILGGVLFGI), 149 to 169 (FIPMMIFSLGAGCGWWLAIVI), and 189 to 209 (MGISFITTGLIAMAFMSLTGI). A compositionally biased stretch (polar residues) spans 229-249 (ENTTNPLKESSSKHQPSISKA). The interval 229–256 (ENTTNPLKESSSKHQPSISKARTQRRSL) is disordered.

This sequence belongs to the NqrDE/RnfAE family. As to quaternary structure, composed of six subunits; NqrA, NqrB, NqrC, NqrD, NqrE and NqrF.

It localises to the cell inner membrane. It carries out the reaction a ubiquinone + n Na(+)(in) + NADH + H(+) = a ubiquinol + n Na(+)(out) + NAD(+). Functionally, NQR complex catalyzes the reduction of ubiquinone-1 to ubiquinol by two successive reactions, coupled with the transport of Na(+) ions from the cytoplasm to the periplasm. NqrA to NqrE are probably involved in the second step, the conversion of ubisemiquinone to ubiquinol. The sequence is that of Na(+)-translocating NADH-quinone reductase subunit E from Chlamydia pneumoniae (Chlamydophila pneumoniae).